The following is a 156-amino-acid chain: ATP synthase subunit b (156 aa).

The helical transmembrane segment at 3-23 (ITFTIFAQSLAFAALIWIVAT) threads the bilayer.

This sequence belongs to the ATPase B chain family. As to quaternary structure, F-type ATPases have 2 components, F(1) - the catalytic core - and F(0) - the membrane proton channel. F(1) has five subunits: alpha(3), beta(3), gamma(1), delta(1), epsilon(1). F(0) has three main subunits: a(1), b(2) and c(10-14). The alpha and beta chains form an alternating ring which encloses part of the gamma chain. F(1) is attached to F(0) by a central stalk formed by the gamma and epsilon chains, while a peripheral stalk is formed by the delta and b chains.

The protein resides in the cell inner membrane. F(1)F(0) ATP synthase produces ATP from ADP in the presence of a proton or sodium gradient. F-type ATPases consist of two structural domains, F(1) containing the extramembraneous catalytic core and F(0) containing the membrane proton channel, linked together by a central stalk and a peripheral stalk. During catalysis, ATP synthesis in the catalytic domain of F(1) is coupled via a rotary mechanism of the central stalk subunits to proton translocation. Its function is as follows. Component of the F(0) channel, it forms part of the peripheral stalk, linking F(1) to F(0). The sequence is that of ATP synthase subunit b from Xylella fastidiosa (strain 9a5c).